We begin with the raw amino-acid sequence, 102 residues long: Small ribosomal subunit protein bS18 (102 aa).

Belongs to the bacterial ribosomal protein bS18 family. As to quaternary structure, part of the 30S ribosomal subunit. Forms a tight heterodimer with protein bS6.

Binds as a heterodimer with protein bS6 to the central domain of the 16S rRNA, where it helps stabilize the platform of the 30S subunit. In Orientia tsutsugamushi (strain Boryong) (Rickettsia tsutsugamushi), this protein is Small ribosomal subunit protein bS18.